A 439-amino-acid polypeptide reads, in one-letter code: Adenylosuccinate synthetase (439 aa).

Residues 14-20 (GDEGKGK) and 42-44 (GHT) contribute to the GTP site. Catalysis depends on aspartate 15, which acts as the Proton acceptor. Mg(2+)-binding residues include aspartate 15 and glycine 42. IMP-binding positions include 15–18 (DEGK), 40–43 (NAGH), threonine 130, arginine 144, glutamine 225, threonine 240, and arginine 304. Histidine 43 serves as the catalytic Proton donor. A substrate-binding site is contributed by 300–306 (TTTGRRR). GTP-binding positions include arginine 306, 332–334 (KLD), and 414–416 (SLG).

This sequence belongs to the adenylosuccinate synthetase family. As to quaternary structure, homodimer. The cofactor is Mg(2+).

It localises to the cytoplasm. The enzyme catalyses IMP + L-aspartate + GTP = N(6)-(1,2-dicarboxyethyl)-AMP + GDP + phosphate + 2 H(+). The protein operates within purine metabolism; AMP biosynthesis via de novo pathway; AMP from IMP: step 1/2. Plays an important role in the de novo pathway of purine nucleotide biosynthesis. Catalyzes the first committed step in the biosynthesis of AMP from IMP. The chain is Adenylosuccinate synthetase from Synechococcus sp. (strain CC9902).